A 182-amino-acid polypeptide reads, in one-letter code: Probable peptidyl-prolyl cis-trans isomerase A (182 aa).

In terms of domain architecture, PPIase cyclophilin-type spans A13–I181.

The protein belongs to the cyclophilin-type PPIase family.

It is found in the cytoplasm. It catalyses the reaction [protein]-peptidylproline (omega=180) = [protein]-peptidylproline (omega=0). Its function is as follows. PPIases accelerate the folding of proteins. It catalyzes the cis-trans isomerization of proline imidic peptide bonds in oligopeptides. The sequence is that of Probable peptidyl-prolyl cis-trans isomerase A (ppiA) from Mycobacterium bovis (strain ATCC BAA-935 / AF2122/97).